We begin with the raw amino-acid sequence, 361 residues long: Versatile peroxidase VPL2 (361 aa).

An N-terminal signal peptide occupies residues 1–22 (MSFKTLSALALALGAAVQFASA). The propeptide occupies 23 to 30 (AVPLVQKR). Intrachain disulfides connect Cys-33/Cys-45, Cys-44/Cys-308, Cys-64/Cys-144, and Cys-272/Cys-337. The Mn(2+) site is built by Glu-66 and Glu-70. The active-site Proton acceptor is His-77. 4 residues coordinate Ca(2+): Asp-78, Gly-90, Asp-92, and Ser-94. A glycan (N-linked (GlcNAc...) asparagine) is linked at Asn-126. The active-site Tryptophan radical intermediate is Trp-194. His-199 contacts heme b. A Ca(2+)-binding site is contributed by Ser-200. 203–207 (AADKV) contributes to the heme b binding site. Position 205 (Asp-205) interacts with Mn(2+). Ca(2+)-binding residues include Asp-217, Thr-219, Val-222, and Asp-224.

This sequence belongs to the peroxidase family. Ligninase subfamily. It depends on heme b as a cofactor. Ca(2+) serves as cofactor.

The protein resides in the secreted. It carries out the reaction 1-(4-hydroxy-3-methoxyphenyl)-2-(2-methoxyphenoxy)propane-1,3-diol + H2O2 = guaiacol + vanillin + glycolaldehyde + H2O. The enzyme catalyses 2 Mn(2+) + H2O2 + 2 H(+) = 2 Mn(3+) + 2 H2O. In terms of biological role, a versatile ligninolytic peroxidase that combines the substrate specificity characteristics of the two other ligninolytic peroxidases, manganese peroxidase and lignin peroxidase. The sequence is that of Versatile peroxidase VPL2 (vpl2) from Pleurotus eryngii (Boletus of the steppes).